A 311-amino-acid chain; its full sequence is Tyrosine recombinase XerD (311 aa).

One can recognise a Core-binding (CB) domain in the interval 2–95 (KTLALQLQGY…AVRGLHRFAA (94 aa)). One can recognise a Tyr recombinase domain in the interval 116–304 (RLPKSLTIDE…TVHALREVWA (189 aa)). Active-site residues include R160, K184, H256, R259, and H282. Y291 acts as the O-(3'-phospho-DNA)-tyrosine intermediate in catalysis.

Belongs to the 'phage' integrase family. XerD subfamily. As to quaternary structure, forms a cyclic heterotetrameric complex composed of two molecules of XerC and two molecules of XerD.

Its subcellular location is the cytoplasm. In terms of biological role, site-specific tyrosine recombinase, which acts by catalyzing the cutting and rejoining of the recombining DNA molecules. The XerC-XerD complex is essential to convert dimers of the bacterial chromosome into monomers to permit their segregation at cell division. It also contributes to the segregational stability of plasmids. This Mycobacterium tuberculosis (strain CDC 1551 / Oshkosh) protein is Tyrosine recombinase XerD.